Consider the following 406-residue polypeptide: Endoglucanase 1 (406 aa).

The N-terminal stretch at 1-43 (MNSKKIGAMIAAAVLSLIVMTPAATRKIVQRQTRNSSTAVENS) is a signal peptide. Polar residues-rich tracts occupy residues 30 to 41 (QRQTRNSSTAVE) and 51 to 62 (ENVPVSQTHTND). Positions 30–62 (QRQTRNSSTAVENSAADESETENVPVSQTHTND) are disordered. The Proton donor role is filled by Glu-210. The active-site Nucleophile is the Glu-330.

This sequence belongs to the glycosyl hydrolase 5 (cellulase A) family.

The enzyme catalyses Endohydrolysis of (1-&gt;4)-beta-D-glucosidic linkages in cellulose, lichenin and cereal beta-D-glucans.. This chain is Endoglucanase 1 (Eg I), found in Ruminococcus albus.